Reading from the N-terminus, the 453-residue chain is MITLKEALKYSKEELENLKKELNEKAKKEKKIGAYIEQFLDKDLSVSGEGVPVAIKDNISVKGWELTSASKILQGYIAPYDASVIVNLKANGFSPFGRCNMDEFAMGSSTASSYYGKTLNPLNFERVPGGSSGGSAAAVAGGLALASLGSDTGGSVRQPAAFCGCVGFKPSYGRVSRYGLASYSSSLDQIGVLTQNVEDAAILYDAIAGYDKMDSTSANIEFIKTAPNLNANKKLKIAVIENYVNDADSEVKNALLKTIDMLKANGHEIVYKNLLDSKFDIAAYYIIATAEASTNLSRYDGVRYGKRSENIQNLKEMYVNTRSEGFGEEVKRRILLGTFVLSSGYYDAYYIKAQKARAFIKAKYEEILQDCDLIFMPVTPTTAFKFDTQKSPIQTYLEDVYTISVNLAGLGGISVPVAKDKEGLNISAQLICKAYDEQTLLDGALSLEQMIKN.

Active-site charge relay system residues include Lys-56 and Ser-131. Catalysis depends on Ser-155, which acts as the Acyl-ester intermediate.

This sequence belongs to the amidase family. GatA subfamily. Heterotrimer of A, B and C subunits.

The catalysed reaction is L-glutamyl-tRNA(Gln) + L-glutamine + ATP + H2O = L-glutaminyl-tRNA(Gln) + L-glutamate + ADP + phosphate + H(+). Its function is as follows. Allows the formation of correctly charged Gln-tRNA(Gln) through the transamidation of misacylated Glu-tRNA(Gln) in organisms which lack glutaminyl-tRNA synthetase. The reaction takes place in the presence of glutamine and ATP through an activated gamma-phospho-Glu-tRNA(Gln). This chain is Glutamyl-tRNA(Gln) amidotransferase subunit A, found in Campylobacter jejuni (strain RM1221).